Here is a 444-residue protein sequence, read N- to C-terminus: MKRIVILGAGESGAGAAVLAKVKGFETFVSDMSAIKDKYKDLLDSHHIAWEEGHHTEELILNADEVIKSPGIPNDAPLILKLKAQGTPVISEIEFAGRYTDAKMICITGSNGKTTTTSLIYHIFKSADLNVGLAGNIGKSLALQVAEEHHDYYIIELSSFQLDNMYNFRANIAVLMNITPDHLDRYDHCMQNYIDAKFRITQNQTTDDAFIFWNDDPIIKQELAKHGLKAHLYPFAAVKEDGAIAYVEDHEVKITEPIAFNMEQEELALTGQHNLYNSLAAGISANLAGITKENIRKALSDFKGVEHRLEKVARVRGIDFINDSKATNVNSCWYALQSMTTKTVLILGGKDKGNDYTEIEDLVREKCSALVYLGLHNEKLHAFFDRFGLPVADVQTGMKDAVEAAYKLAKKGETVLLSPCCASFDLFKSYEDRGDQFKKYVREL.

109–115 (GSNGKTT) contacts ATP.

Belongs to the MurCDEF family.

It is found in the cytoplasm. The catalysed reaction is UDP-N-acetyl-alpha-D-muramoyl-L-alanine + D-glutamate + ATP = UDP-N-acetyl-alpha-D-muramoyl-L-alanyl-D-glutamate + ADP + phosphate + H(+). Its pathway is cell wall biogenesis; peptidoglycan biosynthesis. Its function is as follows. Cell wall formation. Catalyzes the addition of glutamate to the nucleotide precursor UDP-N-acetylmuramoyl-L-alanine (UMA). This Bacteroides thetaiotaomicron (strain ATCC 29148 / DSM 2079 / JCM 5827 / CCUG 10774 / NCTC 10582 / VPI-5482 / E50) protein is UDP-N-acetylmuramoylalanine--D-glutamate ligase.